We begin with the raw amino-acid sequence, 278 residues long: Non-heme chloroperoxidase (278 aa).

Positions 26–264 (PVVLIHGFPL…GAPHGLLWTH (239 aa)) constitute an AB hydrolase-1 domain. Residues serine 99, aspartate 229, and histidine 258 contribute to the active site.

Belongs to the AB hydrolase superfamily. Bacterial non-heme haloperoxidase / perhydrolase family. In terms of assembly, homodimer.

This Kitasatospora aureofaciens (Streptomyces aureofaciens) protein is Non-heme chloroperoxidase (cpo).